Here is a 138-residue protein sequence, read N- to C-terminus: uncharacterized protein (138 aa).

An N-terminal signal peptide occupies residues 1 to 35 (MVAPAARVFLRAVRAALTSTVPDLLCLLARGSPRG).

In terms of tissue distribution, isoform 1 is highly expressed in small intestine, testis and kidney, medium expressed in brain and heart and low expressed in colon; it could not be detected in liver, adrenal gland and pancreas.

The protein localises to the secreted. This is an uncharacterized protein from Homo sapiens (Human).